Reading from the N-terminus, the 130-residue chain is Small ribosomal subunit protein uS9 (130 aa).

The protein belongs to the universal ribosomal protein uS9 family.

This is Small ribosomal subunit protein uS9 from Exiguobacterium sibiricum (strain DSM 17290 / CCUG 55495 / CIP 109462 / JCM 13490 / 255-15).